The following is a 166-amino-acid chain: NAD(P)H-quinone oxidoreductase subunit I, chloroplastic (166 aa).

2 4Fe-4S ferredoxin-type domains span residues glycine 55–lysine 84 and leucine 95–glutamate 124. Cysteine 64, cysteine 67, cysteine 70, cysteine 74, cysteine 104, cysteine 107, cysteine 110, and cysteine 114 together coordinate [4Fe-4S] cluster.

Belongs to the complex I 23 kDa subunit family. NDH is composed of at least 16 different subunits, 5 of which are encoded in the nucleus. [4Fe-4S] cluster serves as cofactor.

Its subcellular location is the plastid. It is found in the chloroplast thylakoid membrane. It catalyses the reaction a plastoquinone + NADH + (n+1) H(+)(in) = a plastoquinol + NAD(+) + n H(+)(out). It carries out the reaction a plastoquinone + NADPH + (n+1) H(+)(in) = a plastoquinol + NADP(+) + n H(+)(out). Functionally, NDH shuttles electrons from NAD(P)H:plastoquinone, via FMN and iron-sulfur (Fe-S) centers, to quinones in the photosynthetic chain and possibly in a chloroplast respiratory chain. The immediate electron acceptor for the enzyme in this species is believed to be plastoquinone. Couples the redox reaction to proton translocation, and thus conserves the redox energy in a proton gradient. In Aphanactis jamesoniana, this protein is NAD(P)H-quinone oxidoreductase subunit I, chloroplastic.